The following is a 406-amino-acid chain: Succinylornithine transaminase (406 aa).

Position 252 is an N6-(pyridoxal phosphate)lysine (lysine 252).

Belongs to the class-III pyridoxal-phosphate-dependent aminotransferase family. AstC subfamily. Pyridoxal 5'-phosphate is required as a cofactor.

The catalysed reaction is N(2)-succinyl-L-ornithine + 2-oxoglutarate = N-succinyl-L-glutamate 5-semialdehyde + L-glutamate. The protein operates within amino-acid degradation; L-arginine degradation via AST pathway; L-glutamate and succinate from L-arginine: step 3/5. Functionally, catalyzes the transamination of N(2)-succinylornithine and alpha-ketoglutarate into N(2)-succinylglutamate semialdehyde and glutamate. Can also act as an acetylornithine aminotransferase. The protein is Succinylornithine transaminase of Escherichia coli (strain SMS-3-5 / SECEC).